A 447-amino-acid polypeptide reads, in one-letter code: Cysteine--tRNA ligase (447 aa).

A Zn(2+)-binding site is contributed by Cys-28. A 'HIGH' region motif is present at residues 30 to 40 (PTVYNYIHIGN). Zn(2+) is bound by residues Cys-211, His-236, and Glu-240. A 'KMSKS' region motif is present at residues 268 to 272 (KMSKS). Residue Lys-271 participates in ATP binding.

This sequence belongs to the class-I aminoacyl-tRNA synthetase family. Monomer. It depends on Zn(2+) as a cofactor.

The protein resides in the cytoplasm. The enzyme catalyses tRNA(Cys) + L-cysteine + ATP = L-cysteinyl-tRNA(Cys) + AMP + diphosphate. The protein is Cysteine--tRNA ligase of Streptococcus agalactiae serotype Ia (strain ATCC 27591 / A909 / CDC SS700).